We begin with the raw amino-acid sequence, 149 residues long: Transcription antitermination protein NusB (149 aa).

This sequence belongs to the NusB family.

Functionally, involved in transcription antitermination. Required for transcription of ribosomal RNA (rRNA) genes. Binds specifically to the boxA antiterminator sequence of the ribosomal RNA (rrn) operons. This is Transcription antitermination protein NusB from Hahella chejuensis (strain KCTC 2396).